Here is a 110-residue protein sequence, read N- to C-terminus: Protein RALF-like 4 (110 aa).

The N-terminal stretch at 1–23 (MGVKMLLIFGLLILAMVAKSVNA) is a signal peptide. The propeptide at 24–58 (TYPLTKSCINGQGCIGEDDELESLMDSETNRRQLA) is removed in mature form. Intrachain disulfides connect C76/C86 and C99/C105.

This sequence belongs to the plant rapid alkalinization factor (RALF) family. Post-translationally, proteolytically cleaved, probably by S1P, a subtilisin-like serine protease (subtilase).

The protein localises to the secreted. In terms of biological role, cell signaling peptide that may regulate plant stress, growth, and development. Mediates a rapid alkalinization of extracellular space by mediating a transient increase in the cytoplasmic Ca(2+) concentration leading to a calcium-dependent signaling events through a cell surface receptor and a concomitant activation of some intracellular mitogen-activated protein kinases. This is Protein RALF-like 4 (RALFL4) from Arabidopsis thaliana (Mouse-ear cress).